A 395-amino-acid polypeptide reads, in one-letter code: Elongation factor Tu (395 aa).

Residues 10 to 204 enclose the tr-type G domain; that stretch reads KPHVNVGTIG…AVDNWVPLPE (195 aa). Residues 19 to 26 are G1; it reads GHVDHGKT. 19–26 is a binding site for GTP; the sequence is GHVDHGKT. Thr26 contacts Mg(2+). The segment at 60-64 is G2; sequence GITIN. The segment at 81-84 is G3; sequence DCPG. GTP-binding positions include 81 to 85 and 136 to 139; these read DCPGH and NKCD. The G4 stretch occupies residues 136 to 139; that stretch reads NKCD. Residues 174–176 form a G5 region; sequence SAL.

The protein belongs to the TRAFAC class translation factor GTPase superfamily. Classic translation factor GTPase family. EF-Tu/EF-1A subfamily. In terms of assembly, monomer.

It localises to the cytoplasm. It catalyses the reaction GTP + H2O = GDP + phosphate + H(+). Functionally, GTP hydrolase that promotes the GTP-dependent binding of aminoacyl-tRNA to the A-site of ribosomes during protein biosynthesis. The polypeptide is Elongation factor Tu (Porphyromonas gingivalis (strain ATCC 33277 / DSM 20709 / CIP 103683 / JCM 12257 / NCTC 11834 / 2561)).